The following is a 472-amino-acid chain: ATP-dependent rRNA helicase rrp3 (472 aa).

Positions 1-52 (MRDVKKRKIAHEAPEHGSDTESTSSHKSVAQQDDPLETQDEATATESRPAPK) are disordered. Over residues 10–19 (AHEAPEHGSD) the composition is skewed to basic and acidic residues. Positions 20 to 31 (TESTSSHKSVAQ) are enriched in polar residues. The short motif at 52–80 (KSFKDLGIIDQLCEACETMGYKAPTPIQA) is the Q motif element. Positions 83 to 254 (IPLALQGRDL…RASLSNPLRV (172 aa)) constitute a Helicase ATP-binding domain. 96–103 (AETGSGKT) contributes to the ATP binding site. Residues 202-205 (DEAD) carry the DEAD box motif. Residues 282-426 (YLVYLLNEFV…EYELEKDEVM (145 aa)) enclose the Helicase C-terminal domain. Residues 444-472 (KNFDEKRGTKAKKFGKGKRSRDEMDQEEG) form a disordered region. A compositionally biased stretch (basic residues) spans 452-462 (TKAKKFGKGKR).

Belongs to the DEAD box helicase family. DDX47/RRP3 subfamily. As to quaternary structure, interacts with the SSU processome.

It is found in the nucleus. The enzyme catalyses ATP + H2O = ADP + phosphate + H(+). Functionally, ATP-dependent rRNA helicase required for pre-ribosomal RNA processing. Involved in the maturation of the 35S-pre-rRNA and to its cleavage to mature 18S rRNA. The chain is ATP-dependent rRNA helicase rrp3 from Aspergillus fumigatus (strain ATCC MYA-4609 / CBS 101355 / FGSC A1100 / Af293) (Neosartorya fumigata).